The sequence spans 99 residues: Large ribosomal subunit protein uL23 (99 aa).

Belongs to the universal ribosomal protein uL23 family. In terms of assembly, part of the 50S ribosomal subunit. Contacts protein L29, and trigger factor when it is bound to the ribosome.

Functionally, one of the early assembly proteins it binds 23S rRNA. One of the proteins that surrounds the polypeptide exit tunnel on the outside of the ribosome. Forms the main docking site for trigger factor binding to the ribosome. The protein is Large ribosomal subunit protein uL23 of Lachnospira eligens (strain ATCC 27750 / DSM 3376 / VPI C15-48 / C15-B4) (Eubacterium eligens).